We begin with the raw amino-acid sequence, 112 residues long: T cell receptor alpha variable 9-2 (112 aa).

The N-terminal stretch at 1 to 20 (MNYSPGLVSLILLLLGRTRG) is a signal peptide. One can recognise an Ig-like domain in the interval 21–112 (DSVTQMEGPV…DSAVYFCALS (92 aa)). An N-linked (GlcNAc...) asparagine glycan is attached at N41. C42 and C109 are disulfide-bonded.

As to quaternary structure, alpha-beta TR is a heterodimer composed of an alpha and beta chain; disulfide-linked. The alpha-beta TR is associated with the transmembrane signaling CD3 coreceptor proteins to form the TR-CD3 (TcR or TCR). The assembly of alpha-beta TR heterodimers with CD3 occurs in the endoplasmic reticulum where a single alpha-beta TR heterodimer associates with one CD3D-CD3E heterodimer, one CD3G-CD3E heterodimer and one CD247 homodimer forming a stable octameric structure. CD3D-CD3E and CD3G-CD3E heterodimers preferentially associate with TR alpha and TR beta chains, respectively. The association of the CD247 homodimer is the last step of TcR assembly in the endoplasmic reticulum and is required for transport to the cell surface.

It localises to the cell membrane. In terms of biological role, v region of the variable domain of T cell receptor (TR) alpha chain that participates in the antigen recognition. Alpha-beta T cell receptors are antigen specific receptors which are essential to the immune response and are present on the cell surface of T lymphocytes. Recognize peptide-major histocompatibility (MH) (pMH) complexes that are displayed by antigen presenting cells (APC), a prerequisite for efficient T cell adaptive immunity against pathogens. Binding of alpha-beta TR to pMH complex initiates TR-CD3 clustering on the cell surface and intracellular activation of LCK that phosphorylates the ITAM motifs of CD3G, CD3D, CD3E and CD247 enabling the recruitment of ZAP70. In turn ZAP70 phosphorylates LAT, which recruits numerous signaling molecules to form the LAT signalosome. The LAT signalosome propagates signal branching to three major signaling pathways, the calcium, the mitogen-activated protein kinase (MAPK) kinase and the nuclear factor NF-kappa-B (NF-kB) pathways, leading to the mobilization of transcription factors that are critical for gene expression and essential for T cell growth and differentiation. The T cell repertoire is generated in the thymus, by V-(D)-J rearrangement. This repertoire is then shaped by intrathymic selection events to generate a peripheral T cell pool of self-MH restricted, non-autoaggressive T cells. Post-thymic interaction of alpha-beta TR with the pMH complexes shapes TR structural and functional avidity. The polypeptide is T cell receptor alpha variable 9-2 (Homo sapiens (Human)).